The chain runs to 280 residues: MSNTYQKRKASKEYGLYNQCKKLNDDELFRLLDDHNSLKRISSARVLQLRGGQDAVRLAIEFCSDKNYIRRDIGAFILGQIKICKKCEDNVFNILNNMALNDKSACVRATAIESTAQRCKKNPIYSPKIVEQSQITAFDKSTNVRRATAFAISVINDKATIPLLINLLKDPNGDVRNWAAFAININKYDNSDIRDCFVEMLQDKNEEVRIEAIIGLSYRKDKRVLSVLCDELKKNTVYDDIIEAAGELGDKTLLPVLDTMLYKFDDNEIITSAIDKLKRS.

In Escherichia coli O157:H7, this protein is Protein YibA (yibA).